Here is a 150-residue protein sequence, read N- to C-terminus: Transcriptional repressor NrdR (150 aa).

A zinc finger spans residues 3–34 (CPYCQFEDTRVIDSRLASEGEQVRRRRECNRC). The 91-residue stretch at 49 to 139 (PRIVKRDGTR…VYRSFEDVSA (91 aa)) folds into the ATP-cone domain.

The protein belongs to the NrdR family. Zn(2+) is required as a cofactor.

In terms of biological role, negatively regulates transcription of bacterial ribonucleotide reductase nrd genes and operons by binding to NrdR-boxes. The protein is Transcriptional repressor NrdR of Alkalilimnicola ehrlichii (strain ATCC BAA-1101 / DSM 17681 / MLHE-1).